We begin with the raw amino-acid sequence, 132 residues long: Large ribosomal subunit protein eL28 (132 aa).

This sequence belongs to the eukaryotic ribosomal protein eL28 family.

The chain is Large ribosomal subunit protein eL28 (rpl28) from Dictyostelium discoideum (Social amoeba).